The primary structure comprises 447 residues: Glucose-6-phosphate isomerase (447 aa).

Glu288 (proton donor) is an active-site residue. Residues His309 and Lys423 contribute to the active site.

Belongs to the GPI family.

The protein localises to the cytoplasm. The catalysed reaction is alpha-D-glucose 6-phosphate = beta-D-fructose 6-phosphate. Its pathway is carbohydrate biosynthesis; gluconeogenesis. It participates in carbohydrate degradation; glycolysis; D-glyceraldehyde 3-phosphate and glycerone phosphate from D-glucose: step 2/4. Catalyzes the reversible isomerization of glucose-6-phosphate to fructose-6-phosphate. The polypeptide is Glucose-6-phosphate isomerase (Lactobacillus gasseri (strain ATCC 33323 / DSM 20243 / BCRC 14619 / CIP 102991 / JCM 1131 / KCTC 3163 / NCIMB 11718 / NCTC 13722 / AM63)).